We begin with the raw amino-acid sequence, 131 residues long: Glycine cleavage system H protein (131 aa).

The Lipoyl-binding domain maps to Arg-24–Glu-106. Lys-65 carries the N6-lipoyllysine modification.

Belongs to the GcvH family. The glycine cleavage system is composed of four proteins: P, T, L and H. It depends on (R)-lipoate as a cofactor.

Functionally, the glycine cleavage system catalyzes the degradation of glycine. The H protein shuttles the methylamine group of glycine from the P protein to the T protein. The sequence is that of Glycine cleavage system H protein from Xanthomonas oryzae pv. oryzae (strain MAFF 311018).